The sequence spans 631 residues: Polyadenylate-binding protein, cytoplasmic and nuclear (631 aa).

The segment at 1–56 (MSDLQESLEKLSINEKAPQAPADDATPSNTTTLEKESSESAAAAAGEGAGEEGEEA) is disordered. RRM domains lie at 58–136 (ASLY…WSQR), 146–223 (GNIF…KHVS), 239–316 (TNVY…RAQK), and 342–419 (VNLF…LAQR). Residues 518 to 545 (GGEFNGPNGQRQQRGAYPPNRNQKGGRP) form a disordered region. In terms of domain architecture, PABC spans 545–626 (PQRDLAAIIS…ALTAFEEYKK (82 aa)).

This sequence belongs to the polyadenylate-binding protein type-1 family.

Its subcellular location is the cytoplasm. It is found in the nucleus. Its function is as follows. Binds the poly(A) tail of mRNA. Appears to be an important mediator of the multiple roles of the poly(A) tail in mRNA biogenesis, stability and translation. In the nucleus, involved in both mRNA cleavage and polyadenylation. Is also required for efficient mRNA export to the cytoplasm. Acts in concert with a poly(A)-specific nuclease (PAN) to affect poly(A) tail shortening, which may occur concomitantly with either nucleocytoplasmic mRNA transport or translational initiation. In the cytoplasm, stimulates translation initiation and regulates mRNA decay through translation termination-coupled poly(A) shortening, probably mediated by PAN. This is Polyadenylate-binding protein, cytoplasmic and nuclear (PAB1) from Meyerozyma guilliermondii (strain ATCC 6260 / CBS 566 / DSM 6381 / JCM 1539 / NBRC 10279 / NRRL Y-324) (Yeast).